A 343-amino-acid chain; its full sequence is Insertion element IS630 uncharacterized 39 kDa protein (343 aa).

The polypeptide is Insertion element IS630 uncharacterized 39 kDa protein (Shigella sonnei).